The primary structure comprises 80 residues: Metallothionein-like protein type 2 (80 aa).

Belongs to the metallothionein superfamily. Type 15 family.

Metallothioneins have a high content of cysteine residues that bind various heavy metals. In Ricinus communis (Castor bean), this protein is Metallothionein-like protein type 2 (MTI).